Consider the following 552-residue polypeptide: MRVLPATLLVGAATAATPAQQVLGGLQDFGNAVQDAMHENLPKINKPLEAFQEQLKSLYEAREFWEEVANAFPQNLDHNPVFSLPKKHTRRPDSHWDHIVRGADVQSVWVTGENGEKEREIEGKLEAYDLRIKKTDPSSLGIDPDVKQYTGYLDDNENDKHLFYWFFESRNDPKNDPVVLWLNGGPGCSSLTGLFMELGPSSIDENIKPVYNPYAWNSNASVIFLDQPVNVGYSYSGSTVSDTVAAGKDVYALLTLFFKQFPEYAEQDFHIAGESYAGHYIPVFTSEILSHQKRNINLKSVLIGNGLTDGLTQYEYYRPMACGEGGYPAVLDESSCRSMDNALGRCQSMIESCYNSESAWVCVPASIYCNNALLAPYQRTGQNVYDVRGKCEDESNLCYKGMGYVSEYLNKPEVRAAVGAEVDGYDSCNFDINRNFLFHGDWMKPYHRLVPGILEQIPVLIYAGDADFICNWLGNKAWTEALEWPGHKEFAAAPMEDLKIVDNEHTGKKIGQIKTHGNFTFMRLYGGGHMVPMDQPEASLEFFNRWLGGEWF.

A signal peptide spans 1–17; the sequence is MRVLPATLLVGAATAAT. Residues 18–133 constitute a propeptide that is removed on maturation; it reads PAQQVLGGLQ…KLEAYDLRIK (116 aa). Disulfide bonds link cysteine 188-cysteine 428, cysteine 322-cysteine 336, cysteine 346-cysteine 369, cysteine 353-cysteine 362, and cysteine 391-cysteine 398. Asparagine 219 carries N-linked (GlcNAc...) asparagine glycosylation. Residue serine 275 is part of the active site. Residue aspartate 467 is part of the active site. N-linked (GlcNAc...) asparagine glycosylation occurs at asparagine 518. Histidine 529 is a catalytic residue.

It belongs to the peptidase S10 family.

The protein resides in the vacuole. The enzyme catalyses Release of a C-terminal amino acid with broad specificity.. In terms of biological role, vacuolar carboxypeptidase involved in degradation of small peptides. Digests preferentially peptides containing an aliphatic or hydrophobic residue in P1' position, as well as methionine, leucine or phenylalanine in P1 position of ester substrate. The protein is Carboxypeptidase Y homolog A (cpyA) of Emericella nidulans (strain FGSC A4 / ATCC 38163 / CBS 112.46 / NRRL 194 / M139) (Aspergillus nidulans).